The sequence spans 384 residues: L-aspartate decarboxylase (384 aa).

An N6-(pyridoxal phosphate)lysine modification is found at K231.

It belongs to the group II decarboxylase family. MfnA subfamily. In terms of assembly, homodimer. Can also form homohexamers. Requires pyridoxal 5'-phosphate as cofactor.

It carries out the reaction L-aspartate + H(+) = beta-alanine + CO2. Its pathway is cofactor biosynthesis; coenzyme A biosynthesis. Inhibited by hydroxylamine. Functionally, catalyzes the decarboxylation of L-aspartate to produce beta-alanine. In vitro, can also catalyze the decarboxylation of L-glutamate to produce 4-aminobutanoate, but this activity does not seem necessary in vivo. Shows much higher activity with L-aspartate than with L-glutamate. Does not decarboxylate L-tyrosine. The protein is L-aspartate decarboxylase of Thermococcus kodakarensis (strain ATCC BAA-918 / JCM 12380 / KOD1) (Pyrococcus kodakaraensis (strain KOD1)).